An 85-amino-acid polypeptide reads, in one-letter code: Progonadoliberin-2 (85 aa).

Residues methionine 1–alanine 23 form the signal peptide. Residue glutamine 24 is modified to Pyrrolidone carboxylic acid. Glycine amide is present on glycine 33.

This sequence belongs to the GnRH family.

The protein localises to the secreted. In terms of biological role, stimulates the secretion of gonadotropins. This is Progonadoliberin-2 (gnrh2) from Morone saxatilis (Striped bass).